A 482-amino-acid polypeptide reads, in one-letter code: Probable cytosol aminopeptidase (482 aa).

Residues lysine 251 and aspartate 256 each contribute to the Mn(2+) site. Residue lysine 263 is part of the active site. Residues aspartate 274, aspartate 333, and glutamate 335 each coordinate Mn(2+). The active site involves arginine 337.

The protein belongs to the peptidase M17 family. It depends on Mn(2+) as a cofactor.

The protein resides in the cytoplasm. The catalysed reaction is Release of an N-terminal amino acid, Xaa-|-Yaa-, in which Xaa is preferably Leu, but may be other amino acids including Pro although not Arg or Lys, and Yaa may be Pro. Amino acid amides and methyl esters are also readily hydrolyzed, but rates on arylamides are exceedingly low.. The enzyme catalyses Release of an N-terminal amino acid, preferentially leucine, but not glutamic or aspartic acids.. In terms of biological role, presumably involved in the processing and regular turnover of intracellular proteins. Catalyzes the removal of unsubstituted N-terminal amino acids from various peptides. This is Probable cytosol aminopeptidase from Acinetobacter baumannii (strain AB307-0294).